Here is a 180-residue protein sequence, read N- to C-terminus: Signaling threshold-regulating transmembrane adapter 1 (180 aa).

Residues M1–W24 are Extracellular-facing. N6 carries an N-linked (GlcNAc...) asparagine glycan. Residues G25–L45 form a helical; Signal-anchor for type III membrane protein membrane-spanning segment. Residues S46 to S180 lie on the Cytoplasmic side of the membrane. Phosphoserine occurs at positions 63 and 66. Y73 bears the Phosphotyrosine mark. An interaction with GRB2 region spans residues Y73–L76. The tract at residues T81–R103 is disordered. A phosphoserine mark is found at S85 and S90. Phosphotyrosine occurs at positions 111, 132, and 153. Positions I130–V135 are interaction with PTPN11. The tract at residues Y153–V156 is interaction with CSK. S166 carries the post-translational modification Phosphoserine. At Y172 the chain carries Phosphotyrosine. An interaction with GRB2 region spans residues Y172–S175.

As to quaternary structure, homodimer; disulfide-linked. When phosphorylated, interacts with PTPN11/SHP2, GRB2 and CSK. Phosphorylated on tyrosines upon TCR activation; which leads to the recruitment of PTPN11, GRB2 and CSK. In terms of tissue distribution, expressed in thymus and spleen, with highest levels in immature thymocytes (at protein level).

The protein resides in the cell membrane. Negatively regulates T-cell antigen receptor (TCR)-mediated signaling. Involved in positive selection of T-cells. This is Signaling threshold-regulating transmembrane adapter 1 (Sit1) from Mus musculus (Mouse).